Reading from the N-terminus, the 293-residue chain is Ribonuclease HIII (293 aa).

Residues Leu-78–Arg-293 form the RNase H type-2 domain. Positions 84, 85, and 187 each coordinate a divalent metal cation.

It belongs to the RNase HII family. RnhC subfamily. It depends on Mn(2+) as a cofactor. Mg(2+) is required as a cofactor.

It is found in the cytoplasm. It catalyses the reaction Endonucleolytic cleavage to 5'-phosphomonoester.. Functionally, endonuclease that specifically degrades the RNA of RNA-DNA hybrids. The chain is Ribonuclease HIII from Streptococcus pneumoniae (strain Taiwan19F-14).